Reading from the N-terminus, the 1077-residue chain is Adenylate cyclase type 4 (1077 aa).

The Cytoplasmic segment spans residues 1 to 28 (MARLFSPRPPPSEDLFYETYYSLSQQYP). Helical transmembrane passes span 29–50 (LLIL…VAWA), 61–80 (FLTT…GLAS), 94–117 (GLIW…VSAW), 120–138 (VSFF…PLGM), 141–162 (AAAA…YLGW), and 170–190 (LLPQ…VGAY). Over 191–582 (HKALMERALR…YRLSALPAFK (392 aa)) the chain is Cytoplasmic. 3 residues coordinate Mg(2+): aspartate 278, isoleucine 279, and aspartate 322. ATP-binding positions include 278–283 (DIVGFT), 320–322 (LGD), and arginine 366. The tract at residues 503–524 (TSTPLPEKAFSPQWSLDRSRTP) is disordered. Position 517 is a phosphoserine (serine 517). A Phosphothreonine modification is found at threonine 533. The next 3 helical transmembrane spans lie at 583 to 604 (YYAA…LVTT), 608 to 630 (ALII…CFSE), and 661 to 684 (VALG…FLPV). Residues 685–717 (SSDCLFLASNVSSVTFNASWEMPGSLPLISIPL) are Extracellular-facing. N-linked (GlcNAc...) asparagine glycans are attached at residues asparagine 694 and asparagine 701. 3 helical membrane passes run 718-738 (ISIP…SLFL), 746-766 (LLLL…SHAW), and 793-809 (MGAI…LVLA). Over 810 to 1077 (RQNEYYCRLD…LTRTGSPSAS (268 aa)) the chain is Cytoplasmic. ATP-binding positions include lysine 927, 1007–1009 (DIW), 1014–1018 (NVASR), and lysine 1054.

Belongs to the adenylyl cyclase class-4/guanylyl cyclase family. Mg(2+) is required as a cofactor. Mn(2+) serves as cofactor.

It is found in the cell membrane. Its subcellular location is the cytoplasm. It carries out the reaction ATP = 3',5'-cyclic AMP + diphosphate. Its activity is regulated as follows. Activated by forskolin. Insensitive to calcium/calmodulin. Stimulated by GNAS and by the G-protein beta and gamma subunit complex. Functionally, catalyzes the formation of the signaling molecule cAMP in response to G-protein signaling. In Mus musculus (Mouse), this protein is Adenylate cyclase type 4 (Adcy4).